The chain runs to 94 residues: MTLRDLVDKLLGRQPASASTARDRLQLVLAHDRSDLSPELLDQMRREIFEVVAKYVDIDLEEGDVSLETEDRVTALVANLPFRRPITSAPPKSD.

The protein belongs to the MinE family.

Its function is as follows. Prevents the cell division inhibition by proteins MinC and MinD at internal division sites while permitting inhibition at polar sites. This ensures cell division at the proper site by restricting the formation of a division septum at the midpoint of the long axis of the cell. The sequence is that of Cell division topological specificity factor from Synechococcus sp. (strain CC9311).